Consider the following 101-residue polypeptide: Urease subunit beta (101 aa).

The protein belongs to the urease beta subunit family. Heterotrimer of UreA (gamma), UreB (beta) and UreC (alpha) subunits. Three heterotrimers associate to form the active enzyme.

The protein resides in the cytoplasm. The enzyme catalyses urea + 2 H2O + H(+) = hydrogencarbonate + 2 NH4(+). It participates in nitrogen metabolism; urea degradation; CO(2) and NH(3) from urea (urease route): step 1/1. This is Urease subunit beta from Jannaschia sp. (strain CCS1).